Reading from the N-terminus, the 879-residue chain is MGMSEIAKAAQKDKAIGGADRDSHTPMMQQYLRIKAQHPDTLLFYRMGDFYELFFDDAEKAARLLDITLTTRGQSAGTPIRMAGVPFHAVEQYLARLVKLGESVVIAEQVGEPGATKGPMERAVSRIVTPGTLTDAALLDDRIDSLLLAATLHRGVLGLAWLNLANGDLRVMECPAEQLQAQFERLRPAEVLVPDGLALPLVESLSPVLRRLADWQFDAGNGERLLTAHFGTRDLAGFDAEGLPVALAAAAALFEYARSTQRQSLEHVTGLRVEREAEYLRLDAATRRNLELTETLRGEASPTLFSLLDSCITSMGSRWLRHALHHPLRDRGVAAQRHGAVGELAGSDAGAPADIGDARMLGAVRAALRGVADVDRITARIALRSARPRDLAALSDSLARLPQLHAALGTPQAPLLCDLLAAIAVPDNALDLLVRAVAAEPAAAVRDGGVIAPGFDAELDELRGIQSNCGEFLLALEVRERERSGIATLKVEFNKVHGFYIEVSHANTGKVPDDYRRRQTLKNAERYITPELKAFEDKALSAQERALAREKLLYEALLEALAAHIPALQRIARALACLDGLGAFAEAAVRHSYVCPQFSAQPGVDIIGGRHPVVERQVEDFISNNCRLAPTRRMLLITGPNMGGKSTFMRQVALIALLAHVGAFVPARSARLGPLDAIFTRIGASDDLASGRSTFMVEMTEASAILHGATEQSLVLMDEIGRGTSTFDGLALAFAIARHLLEKNRCLTLFATHYFELTRLNGDYPECANVHLDAVEHAHRIVFLHAVEDGPASQSYGIEVAALAGIPGSVVREAKRRLRALENREVGNGPQADLFAALPDREPATPSHPALTALAELDPDTLSPREALERLYALKRMTA.

639-646 is a binding site for ATP; it reads GPNMGGKS.

This sequence belongs to the DNA mismatch repair MutS family.

Its function is as follows. This protein is involved in the repair of mismatches in DNA. It is possible that it carries out the mismatch recognition step. This protein has a weak ATPase activity. This Aromatoleum aromaticum (strain DSM 19018 / LMG 30748 / EbN1) (Azoarcus sp. (strain EbN1)) protein is DNA mismatch repair protein MutS.